We begin with the raw amino-acid sequence, 473 residues long: uncharacterized protein (473 aa).

Residues 1-19 (MIRAFLVFPYLYILVQSNG) form the signal peptide.

This is an uncharacterized protein from Methanocaldococcus jannaschii (strain ATCC 43067 / DSM 2661 / JAL-1 / JCM 10045 / NBRC 100440) (Methanococcus jannaschii).